The primary structure comprises 217 residues: CD99 antigen-like protein 2 (217 aa).

The signal sequence occupies residues 1–25; that stretch reads MVAWRWACLICLAFSLTTLVQRGSG. Topologically, residues 26–141 are extracellular; the sequence is DTGGFRLEDA…DDSGMSAETG (116 aa). Positions 36–136 are disordered; sequence VEGTSSVKQR…GGDNSDDSGM (101 aa). Residues 50-64 are compositionally biased toward low complexity; that stretch reads TTTTRRPGATRAPAK. Over residues 70–82 the composition is skewed to acidic residues; it reads AEDDFNLADALDD. The segment covering 83–92 has biased composition (basic and acidic residues); it reads QNDRDHDRKK. O-linked (Xyl...) (chondroitin sulfate) serine glycosylation occurs at Ser134. A helical membrane pass occupies residues 142 to 162; it reads TIAGVASALAMALIGAVSSYI. The Cytoplasmic portion of the chain corresponds to 163-217; that stretch reads SYQQKKFCFSIQQGLNADYVKGENLEAVVCEEPQVKYSALQTQSTEPPPPEPPRI.

It belongs to the CD99 family. In terms of processing, O-glycosylated.

It localises to the cell membrane. The protein localises to the cell junction. Its subcellular location is the secreted. Its function is as follows. Plays a role in a late step of leukocyte extravasation helping cells to overcome the endothelial basement membrane. Acts at the same site as, but independently of, PECAM1. Homophilic adhesion molecule, but these interactions may not be required for cell aggregation. This chain is CD99 antigen-like protein 2 (CD99L2), found in Bos taurus (Bovine).